A 286-amino-acid chain; its full sequence is 4-hydroxybenzoate octaprenyltransferase (286 aa).

A run of 7 helical transmembrane segments spans residues I20–M40, L43–I63, I95–V115, F142–V162, W167–V187, Q210–A230, and L234–I254.

This sequence belongs to the UbiA prenyltransferase family. Mg(2+) is required as a cofactor.

Its subcellular location is the cell inner membrane. It carries out the reaction all-trans-octaprenyl diphosphate + 4-hydroxybenzoate = 4-hydroxy-3-(all-trans-octaprenyl)benzoate + diphosphate. It functions in the pathway cofactor biosynthesis; ubiquinone biosynthesis. Catalyzes the prenylation of para-hydroxybenzoate (PHB) with an all-trans polyprenyl group. Mediates the second step in the final reaction sequence of ubiquinone-8 (UQ-8) biosynthesis, which is the condensation of the polyisoprenoid side chain with PHB, generating the first membrane-bound Q intermediate 3-octaprenyl-4-hydroxybenzoate. The polypeptide is 4-hydroxybenzoate octaprenyltransferase (Shewanella sediminis (strain HAW-EB3)).